The primary structure comprises 330 residues: Cobalamin biosynthesis protein CobD (330 aa).

4 helical membrane-spanning segments follow: residues 60–80, 153–173, 227–247, and 308–328; these read TLVI…PPIV, GIIA…LLGV, LGIV…WKIF, and IVLF…FVLT.

Belongs to the CobD/CbiB family.

Its subcellular location is the cell membrane. The protein operates within cofactor biosynthesis; adenosylcobalamin biosynthesis. Converts cobyric acid to cobinamide by the addition of aminopropanol on the F carboxylic group. This is Cobalamin biosynthesis protein CobD from Desulfotalea psychrophila (strain LSv54 / DSM 12343).